The following is a 797-amino-acid chain: Short transient receptor potential channel 4-associated protein (797 aa).

At A2 the chain carries N-acetylalanine. Residues 2-400 (AAAPAAAGAG…VLYVLCVLLM (399 aa)) are interaction with TNFRSF1A.

As to quaternary structure, component of the DCX(TRPC4AP) E3 ubiquitin ligase complex, at least composed of CUL4A, DDB1, TRPC4AP/TRUSS and RBX1. Interacts with MYC. Constitutively associated with TNFRSF1A. Directly interacts with TRADD, TRAF2, CHUK, IKBKB and IKBKG. Interacts with TRPC1, TRPC4 and TRPC5. Phosphorylated by GSK3B; phosphorylation is required for ubiquitination. Post-translationally, ubiquitinated by a SCF (SKP1-CUL1-F-box protein) E3 ubiquitin-protein ligase containing SKP2, leading to its degradation. Phosphorylation by GSK3B is required for ubiquitination. As to expression, widely expressed, with high levels in heart, liver and testis.

It is found in the cytoplasm. The protein resides in the perinuclear region. It participates in protein modification; protein ubiquitination. Its function is as follows. Substrate-recognition component of a DCX (DDB1-CUL4-X-box) E3 ubiquitin-protein ligase complex required for cell cycle control. The DCX(TRPC4AP) complex specifically mediates the polyubiquitination and subsequent degradation of MYC as part of the DesCEND (destruction via C-end degrons) pathway. The DesCEND (destruction via C-end degrons) pathway recognizes a C-degron located at the extreme C terminus of target proteins, leading to their ubiquitination and degradation. The DCX(TRPC4AP) complex specifically recognizes proteins with an arginine at the minus 3 position (R-3 motif) at the C-terminus, such as MYC, leading to their ubiquitination and degradation. Also participates in the activation of NFKB1 in response to ligation of TNFRSF1A, possibly by linking TNFRSF1A to the IKK signalosome. Involved in JNK activation via its interaction with TRAF2. Also involved in elevation of endoplasmic reticulum Ca(2+) storage reduction in response to CHRM1. This chain is Short transient receptor potential channel 4-associated protein, found in Mus musculus (Mouse).